Reading from the N-terminus, the 217-residue chain is GrpE protein homolog 1, mitochondrial (217 aa).

Residues 1–27 (MAARCVRLARRSLPALALSFRPSPRLL) constitute a mitochondrion transit peptide. Position 94 is an N6-acetyllysine; alternate (lysine 94). Lysine 94 carries the N6-succinyllysine; alternate modification. Lysine 100 carries the post-translational modification N6-acetyllysine. N6-succinyllysine is present on lysine 120. An N6-acetyllysine; alternate modification is found at lysine 215. Lysine 215 is modified (N6-succinyllysine; alternate).

This sequence belongs to the GrpE family. Probable component of the PAM complex at least composed of a mitochondrial HSP70 protein, GRPEL1 or GRPEL2, TIMM44, TIMM16/PAM16 and TIMM14/DNAJC19. Binds to HSP70, HSC70 and HSJ1B. In terms of tissue distribution, ubiquitous. Particularly abundant in heart, kidney and liver.

It localises to the mitochondrion matrix. Its function is as follows. Essential component of the PAM complex, a complex required for the translocation of transit peptide-containing proteins from the inner membrane into the mitochondrial matrix in an ATP-dependent manner. Seems to control the nucleotide-dependent binding of mitochondrial HSP70 to substrate proteins. The sequence is that of GrpE protein homolog 1, mitochondrial (Grpel1) from Rattus norvegicus (Rat).